We begin with the raw amino-acid sequence, 96 residues long: Protein RnfH (96 aa).

The protein belongs to the UPF0125 (RnfH) family.

In Escherichia fergusonii (strain ATCC 35469 / DSM 13698 / CCUG 18766 / IAM 14443 / JCM 21226 / LMG 7866 / NBRC 102419 / NCTC 12128 / CDC 0568-73), this protein is Protein RnfH.